The primary structure comprises 821 residues: Spindle apparatus protein lin-5 (821 aa).

Positions 161-199 (EASSGFRTPKRNNYSLTSLQTPTATARRLRTASSTARRS) are disordered. The segment covering 162–180 (ASSGFRTPKRNNYSLTSLQ) has biased composition (polar residues). The segment covering 181 to 199 (TPTATARRLRTASSTARRS) has biased composition (low complexity). Residues 211 to 634 (KFMRSERELK…REKESAEIKK (424 aa)) are a coiled coil. Disordered regions lie at residues 736–758 (RSES…FTPS) and 779–821 (LKCS…SKKQ).

In terms of assembly, interacts with gpr-1; gpr-1 forms a complex with gpr-2 and GDP-bound goa-1.

It localises to the cytoplasm. Its subcellular location is the cell cortex. The protein resides in the cytoskeleton. It is found in the spindle. The protein localises to the chromosome. It localises to the centromere. Its subcellular location is the kinetochore. The protein resides in the microtubule organizing center. It is found in the centrosome. Essential component of the spindle apparatus required for spindle positioning and chromosome movement. Acts to recruit or anchor gpr-1/gpr-2 complex to the spindle and cortex. Also involved, directly or indirectly, in cytokinesis and in the coupling of DNA replication, centrosome duplication and mitotic division. The protein is Spindle apparatus protein lin-5 (lin-5) of Caenorhabditis elegans.